A 3938-amino-acid polypeptide reads, in one-letter code: Protein bassoon (3938 aa).

The segment at 1–158 is disordered; sequence MGNEASLEGG…PTSPYSVPQI (158 aa). G2 carries N-myristoyl glycine lipidation. A compositionally biased stretch (gly residues) spans 9–29; the sequence is GGAGEGPLPPGGSGLGPGPGA. Over residues 31–61 the composition is skewed to low complexity; that stretch reads KPPSALAGGGQLPVAGAARAAGPPTPGLGLV. The interval 62–70 is 4 X 2 AA tandem repeats of P-G; that stretch reads PGPGPGPGP. 2 stretches are compositionally biased toward polar residues: residues 86–98 and 127–154; these read QRAT…QASA and QVDS…SPYS. S142 carries the phosphoserine modification. Position 145 is an omega-N-methylarginine (R145). C4-type zinc fingers lie at residues 167-190 and 195-217; these read CPIC…CTQC and CNQC…CLNC. 2 disordered regions span residues 228 to 346 and 361 to 456; these read TTAP…LTGK and LMSV…KTMP. A compositionally biased stretch (polar residues) spans 230-240; the sequence is APRSKSQQQLH. Residues S241 and S245 each carry the phosphoserine modification. The segment covering 361-376 has biased composition (polar residues); it reads LMSVQPEADTQGQPSP. The span at 394-406 shows a compositional bias: pro residues; sequence PRPPGSGPGPGPT. 2 C4-type zinc fingers span residues 462-485 and 490-512; these read CPLC…CTAC and CTLC…CLNC. Disordered regions lie at residues 523 to 921, 934 to 1247, 1294 to 1541, and 1561 to 1611; these read GEPA…LQGG, GRLW…TPAG, MDPM…WQQS, and RMVH…RAPS. Residues 526–539 show a composition bias toward pro residues; it reads APLPLPTPQEPPAG. A compositionally biased stretch (low complexity) spans 548-589; it reads SPLKQKGPQGPGQPSGSLPPKASPQAAKASPQAAKASPQAKP. 3 tandem repeats follow at residues 568–574, 575–581, and 582–588. The 3 X 7 AA tandem repeats of K-A-S-P-Q-A-[AK] stretch occupies residues 568–588; sequence KASPQAAKASPQAAKASPQAK. Over residues 616–629 the composition is skewed to pro residues; the sequence is VPKPPPETAVPPGT. The span at 668–677 shows a compositional bias: polar residues; it reads QDLSRSPQSL. Residues 678–692 show a composition bias toward low complexity; the sequence is SDTGYSSDGVSSSQS. A compositionally biased stretch (polar residues) spans 693–702; that stretch reads EITGVVQQEV. Composition is skewed to acidic residues over residues 769–784 and 847–858; these read FDSD…EDDS and SAEEDNLEEDDT. R863 is subject to Omega-N-methylarginine. The residue at position 965 (S965) is a Phosphoserine. The segment covering 979 to 996 has biased composition (low complexity); it reads PASTPSYTSGTSPTSLSS. A coiled-coil region spans residues 1032-1087; that stretch reads IEDSSEEEELREEEELLREQEKMREVEQQRIRSTARKTRRDKEELRAQRRRERSKT. Residues 1034–1047 are compositionally biased toward acidic residues; sequence DSSEEEELREEEEL. Phosphoserine occurs at positions 1035 and 1036. Over residues 1048 to 1061 the composition is skewed to basic and acidic residues; sequence LREQEKMREVEQQR. S1085 is modified (phosphoserine). Residue T1087 is modified to Phosphothreonine. A phosphoserine mark is found at S1093 and S1099. The span at 1102–1117 shows a compositional bias: basic and acidic residues; that stretch reads EELRQAAEMEELHRSS. Low complexity-rich tracts occupy residues 1118–1128 and 1158–1175; these read CSEYSPSPSLD and SPTE…SGRP. The stretch at 1176 to 1203 forms a coiled coil; it reads LKSAEEAYEDMMRKAELLQRQQGQAAGA. The span at 1177 to 1192 shows a compositional bias: basic and acidic residues; the sequence is KSAEEAYEDMMRKAEL. A compositionally biased stretch (low complexity) spans 1194 to 1204; sequence QRQQGQAAGAR. The span at 1211–1224 shows a compositional bias: polar residues; the sequence is SQPTGPRSQGSFEY. Position 1221 is a phosphoserine (S1221). The segment covering 1318 to 1328 has biased composition (low complexity); that stretch reads SFPTSTSSDSS. T1339 is a glycosylation site (O-linked (GlcNAc) threonine). Residues 1342–1351 show a composition bias toward basic and acidic residues; that stretch reads FAKEPQEPLK. 2 stretches are compositionally biased toward low complexity: residues 1352–1364 and 1374–1386; these read LHSS…LASK and PGTP…APCP. The O-linked (GlcNAc) threonine glycan is linked to T1380. The span at 1402–1426 shows a compositional bias: polar residues; the sequence is SPSTSSTIHSYGQPPTTANYGSQTE. Phosphoserine is present on residues S1470, S1479, and S1481. The span at 1476–1487 shows a compositional bias: low complexity; it reads STPSESPTFSPS. 2 stretches are compositionally biased toward polar residues: residues 1496 to 1510 and 1561 to 1597; these read EFST…SSDI and RMVH…SQMP. Omega-N-methylarginine occurs at positions 1780 and 1784. R1794 bears the Asymmetric dimethylarginine; alternate mark. R1794 carries the omega-N-methylarginine; alternate modification. An Omega-N-methylarginine modification is found at R1806. The interval 1914 to 1964 is disordered; that stretch reads PSAPDKSVTDAALPGQSSGPFYSPRDPEPPEPLTFRAQGVVGPGPHEEQRP. O-linked (GlcNAc) threonine glycosylation occurs at T1922. Phosphoserine is present on residues S1978 and S2034. Omega-N-methylarginine is present on residues R2039 and R2069. 3 positions are modified to asymmetric dimethylarginine: R2243, R2253, and R2259. The tract at residues 2280–2305 is disordered; that stretch reads AAKASGAGGPPRPELPAGGAREEPLS. Residue T2307 is glycosylated (O-linked (GlcNAc) threonine). Disordered regions lie at residues 2318–2343 and 2461–2486; these read VAQA…SGVL and EEQK…PPAA. Positions 2345–2470 form a coiled coil; that stretch reads RPVMEKEEAS…EEQKQRQKAP (126 aa). T2510 carries O-linked (GlcNAc) threonine glycosylation. Positions 2513–2648 are disordered; that stretch reads PGQAREPVLH…HEASASSSAA (136 aa). Residues 2527-2537 show a composition bias toward polar residues; it reads SSASDMSLQTE. A Phosphoserine modification is found at S2564. Phosphothreonine is present on residues T2581 and T2608. The segment covering 2629-2641 has biased composition (basic and acidic residues); it reads RHSDSGSDSKHEA. A glycan (O-linked (GlcNAc) threonine) is linked at T2685. Residues 2715 to 3263 are interaction with DAO; sequence EPDGQAQGVA…GGVSGRPGKD (549 aa). S2796, S2845, and S2851 each carry phosphoserine. Residues 2839–2859 are disordered; sequence TLQRSLSDPKPLSPTAEESAK. An O-linked (GlcNAc) threonine glycan is attached at T2930. Residues 2933-2975 adopt a coiled-coil conformation; sequence SLLRELDRDLRLVEHESTKLRKKQAELDEEEKEIDAKLKYLEL. Residues 2934–2996 form a sufficient for binding to ERC2 region; the sequence is LLRELDRDLR…DRVGRDYPPL (63 aa). The residue at position 3007 (S3007) is a Phosphoserine. Polar residues predominate over residues 3055-3068; the sequence is TQYTAGSSGPTQNG. Disordered regions lie at residues 3055 to 3148, 3162 to 3399, 3414 to 3546, and 3569 to 3910; these read TQYT…ADLE, AVTV…SRKF, QQRY…PRAH, and YHLG…VFSK. Residues 3184-3196 show a composition bias toward basic and acidic residues; the sequence is EHGKAPEHPRGGD. Residues 3198-3222 show a composition bias toward polar residues; it reads SSVSQSPAPTYPSDSHYTSLEQNVP. A Phosphoserine modification is found at S3286. A compositionally biased stretch (polar residues) spans 3304–3315; it reads ESNGRPASTHYY. Composition is skewed to basic and acidic residues over residues 3316-3328, 3358-3377, and 3450-3469; these read SDSD…RADK, QGME…KDVE, and LSSH…RETA. S3368 carries the phosphoserine modification. R3488 carries the post-translational modification Omega-N-methylarginine. Positions 3506–3520 are enriched in low complexity; sequence PLGRPRPAGGALPPG. Composition is skewed to basic and acidic residues over residues 3535–3546 and 3578–3588; these read VQEHVKDGPRAH and WFDKPRDARSD. A compositionally biased stretch (basic residues) spans 3638–3651; the sequence is EHRHHGDHGRHSGR. A compositionally biased stretch (basic and acidic residues) spans 3652–3676; sequence HAGEEPGRRAARPHARDMGRHETRP. Positions 3751 to 3820 are enriched in low complexity; that stretch reads PQQSQPPSSR…ARLQQQSQPT (70 aa). Positions 3772 to 3803 form a coiled coil; it reads QTQQQQQQQQQQQQQQQQQQQQQQQQGLGQQA. Position 3822 is an omega-N-methylarginine (R3822). Positions 3834 to 3848 are enriched in pro residues; the sequence is KPQPGPTTAPGPQPA. Composition is skewed to low complexity over residues 3860-3887 and 3894-3904; these read KPAA…KTGA and GAPAGQPAAEG.

In terms of assembly, interacts with PCLO, ERC2/CAST1, RIMS1 and UNC13A. Interacts with TPRG1L. Interacts with DYNLL1 and DYNLL2; these interactions potentially link PTVs to dynein and myosin V motor complexes. Interacts with ATG5; this interaction is important for the regulation of presynaptic autophagy. Interacts (via C-terminus) with TRIO (via N-terminus). Interacts with CTBP1. Interacts with SIAH1; this interaction negatively regulates SIAH1 E3 ligase activity. Interacts (via coiled region) with DAO; the interaction is direct. Post-translationally, myristoylated. The N-terminal myristoylation is not sufficient for presynaptic localization. Detected at synapses in the stratum lucidum in the hippocampus CA3 region (at protein level).

Its subcellular location is the cytoplasm. It localises to the presynaptic active zone. It is found in the cytoskeleton. The protein localises to the cytoplasmic vesicle. The protein resides in the secretory vesicle. Its subcellular location is the synaptic vesicle membrane. In terms of biological role, scaffold protein of the presynaptic cytomatrix at the active zone (CAZ) which is the place in the synapse where neurotransmitter is released. After synthesis, participates in the formation of Golgi-derived membranous organelles termed Piccolo-Bassoon transport vesicles (PTVs) that are transported along axons to sites of nascent synaptic contacts. At the presynaptic active zone, regulates the spatial organization of synaptic vesicle cluster, the protein complexes that execute membrane fusion and compensatory endocytosis. Also functions in processes other than assembly such as the regulation of specific presynaptic protein ubiquitination by interacting with SIAH1 or the regulation of presynaptic autophagy by associating with ATG5. Also mediates synapse to nucleus communication leading to reconfiguration of gene expression by associating with the transcriptional corepressor CTBP1 and by subsequently reducing the size of its pool available for nuclear import. Inhibits the activity of the proportion of DAO enzyme that localizes to the presynaptic active zone, which may modulate synaptic transmission. This chain is Protein bassoon, found in Rattus norvegicus (Rat).